The chain runs to 134 residues: Protein E6 (134 aa).

2 zinc fingers span residues 15-51 (CLQC…CQIC) and 88-124 (CYYC…CYSC).

It belongs to the papillomaviridae E6 protein family. Forms homodimers. Interacts with ubiquitin-protein ligase UBE3A/E6-AP; this interaction stimulates UBE3A ubiquitin activity. Interacts with host BAK1.

It is found in the host cytoplasm. The protein resides in the host nucleus. Its function is as follows. Plays a major role in the induction and maintenance of cellular transformation. E6 associates with host UBE3A/E6-AP ubiquitin-protein ligase and modulates its activity. Protects host keratinocytes from apoptosis by mediating the degradation of host BAK1. May also inhibit host immune response. This Bos taurus (Bovine) protein is Protein E6.